The chain runs to 543 residues: UBP9-binding protein bun62 (543 aa).

Phosphoserine is present on serine 43. 5 WD repeats span residues 239 to 279 (LNSS…QPLH), 320 to 361 (FSKS…DVFH), 362 to 401 (SYFA…LVAR), 404 to 448 (GHKS…IHRP), and 513 to 542 (VDDS…TWQR).

In terms of assembly, interacts with ubp9 and bun107.

Its subcellular location is the nucleus. The protein resides in the cytoplasm. The protein localises to the cell tip. In terms of biological role, required for the ubp9 recruitment to septa and cell tips but also for its enzymatic activity at these specific locations. The protein is UBP9-binding protein bun62 (bun62) of Schizosaccharomyces pombe (strain 972 / ATCC 24843) (Fission yeast).